A 233-amino-acid polypeptide reads, in one-letter code: Uridylate kinase (233 aa).

ATP is bound by residues 8-11 (KLSG), glycine 51, and arginine 55. Residues aspartate 68 and 129 to 136 (TSNPFFTT) each bind UMP. The ATP site is built by threonine 156, tyrosine 162, and aspartate 165.

Belongs to the UMP kinase family. Homohexamer.

The protein resides in the cytoplasm. The catalysed reaction is UMP + ATP = UDP + ADP. It participates in pyrimidine metabolism; CTP biosynthesis via de novo pathway; UDP from UMP (UMPK route): step 1/1. Its activity is regulated as follows. Inhibited by UTP. In terms of biological role, catalyzes the reversible phosphorylation of UMP to UDP. The sequence is that of Uridylate kinase from Pseudothermotoga lettingae (strain ATCC BAA-301 / DSM 14385 / NBRC 107922 / TMO) (Thermotoga lettingae).